Reading from the N-terminus, the 688-residue chain is Polyphosphate kinase (688 aa).

Asn-45 provides a ligand contact to ATP. Arg-375 and Arg-405 together coordinate Mg(2+). One can recognise a PLD phosphodiesterase domain in the interval 430 to 464 (PGLKIHAKLFLISRKENGEVVRYAHIGTGNFNEKT). The active-site Phosphohistidine intermediate is His-435. 3 residues coordinate ATP: Tyr-468, Arg-564, and His-592.

This sequence belongs to the polyphosphate kinase 1 (PPK1) family. Requires Mg(2+) as cofactor. In terms of processing, an intermediate of this reaction is the autophosphorylated ppk in which a phosphate is covalently linked to a histidine residue through a N-P bond.

The enzyme catalyses [phosphate](n) + ATP = [phosphate](n+1) + ADP. Catalyzes the reversible transfer of the terminal phosphate of ATP to form a long-chain polyphosphate (polyP). This Escherichia coli O6:H1 (strain CFT073 / ATCC 700928 / UPEC) protein is Polyphosphate kinase.